We begin with the raw amino-acid sequence, 427 residues long: Phosphoglucosamine mutase (427 aa).

The Phosphoserine intermediate role is filled by serine 94. Mg(2+)-binding residues include serine 94, aspartate 228, aspartate 230, and aspartate 232. Phosphoserine is present on serine 94.

Belongs to the phosphohexose mutase family. The cofactor is Mg(2+). In terms of processing, activated by phosphorylation.

It catalyses the reaction alpha-D-glucosamine 1-phosphate = D-glucosamine 6-phosphate. In terms of biological role, catalyzes the conversion of glucosamine-6-phosphate to glucosamine-1-phosphate. This Thermotoga sp. (strain RQ2) protein is Phosphoglucosamine mutase.